We begin with the raw amino-acid sequence, 121 residues long: Large ribosomal subunit protein uL14 (121 aa).

It belongs to the universal ribosomal protein uL14 family. As to quaternary structure, part of the 50S ribosomal subunit. Forms a cluster with proteins L3 and L19. In the 70S ribosome, L14 and L19 interact and together make contacts with the 16S rRNA in bridges B5 and B8.

Functionally, binds to 23S rRNA. Forms part of two intersubunit bridges in the 70S ribosome. This is Large ribosomal subunit protein uL14 from Phocaeicola vulgatus (strain ATCC 8482 / DSM 1447 / JCM 5826 / CCUG 4940 / NBRC 14291 / NCTC 11154) (Bacteroides vulgatus).